The sequence spans 801 residues: Cadherin-20 (801 aa).

Residues 1-34 (MWTTGRMSNAKSWLGLGTSLYFWALMDLATTVLS) form the signal peptide. The propeptide occupies 35–59 (STPMPEVELDTLFSGKPQSHQRSRR). The Extracellular portion of the chain corresponds to 60 to 619 (SWVWNQFFVL…AYMLPVSLSR (560 aa)). Cadherin domains follow at residues 61-165 (WVWN…EPKF), 166-274 (LDGP…PPRF), 275-389 (PQKH…PPVF), 390-494 (EPRF…APEF), and 494-610 (FPRF…SPEA). N-linked (GlcNAc...) asparagine glycosylation is present at Asn-261. Residues Asn-420, Asn-461, and Asn-542 are each glycosylated (N-linked (GlcNAc...) asparagine). Residues 620–640 (GALIAILACVFVLLVLVLLIL) form a helical membrane-spanning segment. The Cytoplasmic portion of the chain corresponds to 641–801 (SMRRHRKQPY…GASEGPSPLW (161 aa)).

The protein resides in the cell membrane. Its function is as follows. Cadherins are calcium-dependent cell adhesion proteins. They preferentially interact with themselves in a homophilic manner in connecting cells; cadherins may thus contribute to the sorting of heterogeneous cell types. This is Cadherin-20 (Cdh20) from Rattus norvegicus (Rat).